The primary structure comprises 195 residues: Guanylate kinase (195 aa).

The Guanylate kinase-like domain occupies 5–183 (GILFVISGPS…ALQKITAIII (179 aa)). 12-19 (GPSGVGKG) serves as a coordination point for ATP.

It belongs to the guanylate kinase family.

It is found in the cytoplasm. The catalysed reaction is GMP + ATP = GDP + ADP. In terms of biological role, essential for recycling GMP and indirectly, cGMP. This is Guanylate kinase from Syntrophomonas wolfei subsp. wolfei (strain DSM 2245B / Goettingen).